A 455-amino-acid chain; its full sequence is Serine--tRNA ligase (455 aa).

252–254 (TAE) contacts L-serine. ATP is bound by residues 283 to 285 (RKE) and Val299. Position 306 (Glu306) interacts with L-serine. Residue 370-373 (EVVS) participates in ATP binding. Residue Thr406 participates in L-serine binding.

This sequence belongs to the class-II aminoacyl-tRNA synthetase family. Type-1 seryl-tRNA synthetase subfamily. In terms of assembly, homodimer. The tRNA molecule binds across the dimer.

The protein localises to the cytoplasm. It carries out the reaction tRNA(Ser) + L-serine + ATP = L-seryl-tRNA(Ser) + AMP + diphosphate + H(+). The enzyme catalyses tRNA(Sec) + L-serine + ATP = L-seryl-tRNA(Sec) + AMP + diphosphate + H(+). Its pathway is aminoacyl-tRNA biosynthesis; selenocysteinyl-tRNA(Sec) biosynthesis; L-seryl-tRNA(Sec) from L-serine and tRNA(Sec): step 1/1. In terms of biological role, catalyzes the attachment of serine to tRNA(Ser). Is also able to aminoacylate tRNA(Sec) with serine, to form the misacylated tRNA L-seryl-tRNA(Sec), which will be further converted into selenocysteinyl-tRNA(Sec). The sequence is that of Serine--tRNA ligase from Pyrococcus furiosus (strain ATCC 43587 / DSM 3638 / JCM 8422 / Vc1).